Reading from the N-terminus, the 429-residue chain is Fc receptor-like protein 1 (429 aa).

An N-terminal signal peptide occupies residues 1–16; sequence MLPRLLLLICAPLCEP. Ig-like C2-type domains are found at residues 17–104, 109–200, and 208–291; these read AELF…SQIN, PVAD…VSIT, and PILM…EAVT. Over 17–307 the chain is Extracellular; sequence AELFLIASPS…TGARSNHLTS (291 aa). Intrachain disulfides connect C38–C86, C134–C183, and C229–C276. N293 carries an N-linked (GlcNAc...) asparagine glycan. Residues 308 to 328 form a helical membrane-spanning segment; sequence GVIEGLLSTLGPATVALLFCY. Residues 329–429 lie on the Cytoplasmic side of the membrane; the sequence is GLKRKIGRRS…ITDVDYEDAM (101 aa). 5 short sequence motifs (ITIM motif) span residues 354–359, 367–372, 379–384, 410–415, and 423–428; these read FTYLNS, PIYENV, EVYSLA, DIYSRL, and VDYEDA.

Interacts with ABL1. Interacts with GRB2 and SOS1. Interacts with SHIP-1/INPP5D. Phosphorylated on tyrosines upon activation. In terms of tissue distribution, primarily expressed in secondary lymphoid tissues by mature subsets of B-cells. Detected in spleen, lymph node, heart, skeletal muscle, kidney, liver and placenta. Specifically expressed by mature B lineage cells with higher expression in naive versus memory B-cells (at protein level).

The protein localises to the cell membrane. Type I transmembrane surface glycoprotein preferentially expressed by B-cells that regulates BCR-mediated signaling responses. Recruits ABL1 as the intracellular effector molecule to enhance B-cell activation. Also plays a negative role by suppressing ERK activation under homeostatic and BCR-stimulated conditions in a GRB2-dependent manner. In Homo sapiens (Human), this protein is Fc receptor-like protein 1 (FCRL1).